Consider the following 597-residue polypeptide: MKLILILIFLFSCILFINCENLIKVLDVRLAQTHVIPVEGKTWNLNNNIQHMSIVGNRRAFLLASFDDPTQTYYTTIWFNDKLVGPLKLNDPSQLPPTEDKGEKYSTVHHSIMLSKEWVKVGMKIQFFTIGNDGNGSSVVKSSDFFYPDVGQDYTLKMWTLPFYLFGANDTNTQPFSKTKGIDSEITKELIEKWSCSDLQAINHPIQKIDWSYFVMEPRNGNPAMVITNSDQKKDGYAIMSGVLNILTQIRKVFGESSSSIQIYSPLLHLDSKGKYADPYGGLGGGSRGTGDYTYKGIFIHEQGHAMGLPHAGEAFDKGTFPYQKGSLSGSEWGFDANHNEFLGNFLPPTAEYYRNCQKSFLIDNKGRCIKQSVMQGGAGDQSSKYRFSMFADYEMTTIQNYFKNSIYYDETNGTYKKWNDTSKSYYDYKPITQNKGLWGIDDGTPIERDIDVYTILFTHSTVGPKELSQIYPLLKSKGNLMRQFDPTNKTEMAIIIPNTGAIPWYCHDSGCDYTVRVTFDDNSLQHVLLQQGKRKYWKPMSDLKDNIMDPKSSDSFMLGGINVKANKKINKVELLETLLGWNGISNNATVLASKSF.

The N-terminal stretch at Met1 to Cys19 is a signal peptide. Positions Pro148–Tyr409 constitute a Peptidase M66 domain. Zn(2+) is bound at residue His301. Glu302 is a catalytic residue. The Zn(2+) site is built by His305 and His311.

The protein belongs to the dictomallein family. Requires Zn(2+) as cofactor.

The protein resides in the secreted. The protein is Dictomallein-3 (dtmlC) of Dictyostelium discoideum (Social amoeba).